Here is a 109-residue protein sequence, read N- to C-terminus: Large ribosomal subunit protein uL22 (109 aa).

The protein belongs to the universal ribosomal protein uL22 family. Part of the 50S ribosomal subunit.

Functionally, this protein binds specifically to 23S rRNA; its binding is stimulated by other ribosomal proteins, e.g. L4, L17, and L20. It is important during the early stages of 50S assembly. It makes multiple contacts with different domains of the 23S rRNA in the assembled 50S subunit and ribosome. In terms of biological role, the globular domain of the protein is located near the polypeptide exit tunnel on the outside of the subunit, while an extended beta-hairpin is found that lines the wall of the exit tunnel in the center of the 70S ribosome. The protein is Large ribosomal subunit protein uL22 of Psychrobacter cryohalolentis (strain ATCC BAA-1226 / DSM 17306 / VKM B-2378 / K5).